The following is a 222-amino-acid chain: Chymotrypsin-1 (222 aa).

The Peptidase S1 domain maps to 1–221; it reads IVGGKDAPVG…FVSWINANLK (221 aa). A disulfide bond links Cys26 and Cys42. Residues His41 and Asp87 each act as charge relay system in the active site. 2 cysteine pairs are disulfide-bonded: Cys151–Cys164 and Cys174–Cys198. The active-site Charge relay system is Ser178.

This sequence belongs to the peptidase S1 family.

It is found in the secreted. The protein localises to the extracellular space. The catalysed reaction is Preferential cleavage: Tyr-|-Xaa, Trp-|-Xaa, Phe-|-Xaa, Leu-|-Xaa.. In Solenopsis invicta (Red imported fire ant), this protein is Chymotrypsin-1.